We begin with the raw amino-acid sequence, 367 residues long: Apolipoprotein A-V (367 aa).

The signal sequence occupies residues 1–20 (MAAVITWALALLSVFATVQA). The residue at position 52 (S52) is a Phosphoserine. A coiled-coil region spans residues 231–255 (TRKAKDLHTSIQRNLDQLRDELSTF). A disordered region spans residues 305–332 (EEIQHQLAPPPPSHSAFAPELGHSDSNK).

It belongs to the apolipoprotein A1/A4/E family. As to quaternary structure, interacts with GPIHBP1. Interacts with SORL1; this interaction leads to APOA5 internalization and sorting either to lysosomes and degradation, or to the trans-Golgi network. Post-translationally, phosphorylated by FAM20C in the extracellular medium. As to expression, liver.

It localises to the secreted. It is found in the early endosome. The protein localises to the late endosome. The protein resides in the golgi apparatus. Its subcellular location is the trans-Golgi network. Minor apolipoprotein mainly associated with HDL and to a lesser extent with VLDL. May also be associated with chylomicrons. Important determinant of plasma triglyceride (TG) levels by both being a potent stimulator of apo-CII lipoprotein lipase (LPL) TG hydrolysis and an inhibitor of the hepatic VLDL-TG production rate (without affecting the VLDL-apoB production rate). Activates poorly lecithin:cholesterol acyltransferase (LCAT) and does not enhance efflux of cholesterol from macrophages. Binds heparin. This is Apolipoprotein A-V (Apoa5) from Rattus norvegicus (Rat).